Reading from the N-terminus, the 406-residue chain is 4-hydroxy-3-methylbut-2-en-1-yl diphosphate synthase (ferredoxin) (406 aa).

[4Fe-4S] cluster-binding residues include C315, C318, C349, and E356.

The protein belongs to the IspG family. [4Fe-4S] cluster serves as cofactor.

It carries out the reaction (2E)-4-hydroxy-3-methylbut-2-enyl diphosphate + 2 oxidized [2Fe-2S]-[ferredoxin] + H2O = 2-C-methyl-D-erythritol 2,4-cyclic diphosphate + 2 reduced [2Fe-2S]-[ferredoxin] + H(+). It participates in isoprenoid biosynthesis; isopentenyl diphosphate biosynthesis via DXP pathway; isopentenyl diphosphate from 1-deoxy-D-xylulose 5-phosphate: step 5/6. Functionally, converts 2C-methyl-D-erythritol 2,4-cyclodiphosphate (ME-2,4cPP) into 1-hydroxy-2-methyl-2-(E)-butenyl 4-diphosphate. The chain is 4-hydroxy-3-methylbut-2-en-1-yl diphosphate synthase (ferredoxin) from Microcystis aeruginosa (strain NIES-843 / IAM M-2473).